Consider the following 629-residue polypeptide: tRNA uridine 5-carboxymethylaminomethyl modification enzyme MnmG (629 aa).

FAD contacts are provided by residues 13–18 (GGGHAG), Val-125, and Ser-180. 273-287 (GPRYCPSIEDKVMRF) lines the NAD(+) pocket. Gln-370 contacts FAD.

It belongs to the MnmG family. As to quaternary structure, homodimer. Heterotetramer of two MnmE and two MnmG subunits. It depends on FAD as a cofactor.

The protein localises to the cytoplasm. Its function is as follows. NAD-binding protein involved in the addition of a carboxymethylaminomethyl (cmnm) group at the wobble position (U34) of certain tRNAs, forming tRNA-cmnm(5)s(2)U34. The chain is tRNA uridine 5-carboxymethylaminomethyl modification enzyme MnmG from Shigella dysenteriae serotype 1 (strain Sd197).